A 288-amino-acid chain; its full sequence is CBY1-interacting BAR domain-containing protein 1 (288 aa).

A mitochondrion-targeting transit peptide spans 1–47 (MLRRSLENRDAQTRQLQDAVTNVEKHFGELCQIFAAYVRKTARLRDK). The interval 10 to 220 (DAQTRQLQDA…KIDEEEDLEV (211 aa)) is BAR-like. The stretch at 107 to 176 (KMKRDDLKAT…ETIDNFEKQK (70 aa)) forms a coiled coil. The tract at residues 266–288 (RKDHQTEDDDEEDEDLDVTEEEN) is disordered. A compositionally biased stretch (acidic residues) spans 271-288 (TEDDDEEDEDLDVTEEEN).

This sequence belongs to the CIBAR family. In terms of assembly, homodimer (via BAR-like domain). Heterodimer with FAM92B (via BAR-like domains). Interacts (via BAR-like domain) with CBY1; this interaction is required for targeting FAM92A to centriole and cilium basal body. Interacts (via BAR-like domain) with CBY3; both proteins form a ninefold symmetric structure at the flagellar base; are recruited to the annulus in a mutually dependent manner and regulate annulus positionning.

The protein resides in the cytoplasm. Its subcellular location is the cytoskeleton. The protein localises to the microtubule organizing center. It localises to the centrosome. It is found in the centriole. The protein resides in the cilium basal body. Its subcellular location is the cell projection. The protein localises to the cilium. It localises to the nucleus. It is found in the mitochondrion inner membrane. The protein resides in the flagellum. Its function is as follows. Plays a critical role in regulating mitochondrial ultrastructure and function by maintaining the integrity of mitochondrial morphology, particularly the organization of cristae. Preferentially binds to negatively charged phospholipids like cardiolipin and phosphatidylinositol 4,5-bisphosphate enhancing its interaction with mitochondrial membranes. Induces membrane curvature and tubulation, which are critical for maintaining mitochondrial ultrastructure and the organization of cristae. Plays a crucial role in ciliogenesis. May play a role in limb development through its role in ciliogenesis. Plays a key role in the correct positioning of the annulus, a septin-based ring structure in the sperm flagellum, serving both as a physical barrier and a membrane diffusion barrier that separates the midpiece (MP) from the principal piece (PP). This positioning is essential for proper sperm motility and function. Interacts with CBY3 to form a complex which localizes to the curved membrane region of the flagellar pocket. By doing so, may provide stability and rigidity to the periannular membrane to prevent membrane deformation. This function is crucial for halting annulus migration at the proximal end of the fibrous sheath-containing PP. The polypeptide is CBY1-interacting BAR domain-containing protein 1 (Bos taurus (Bovine)).